A 210-amino-acid polypeptide reads, in one-letter code: MADS-box protein AGL42 (210 aa).

Positions 1–61 (MVRGKIEMKK…GRLYEFSSSD (61 aa)) constitute an MADS-box domain. The K-box domain occupies 87–177 (LQQLKQEASH…HQKNVINPWR (91 aa)).

Expressed in quiescent center (QC) cells of root tips. Expressed at the base of the petiole of cotyledons and leaves, in flower buds, petals, sepals and abscission zone of flowers and siliques.

The protein resides in the nucleus. In terms of biological role, MADS-box transcription factor that acts with AGL71 and AGL72 in the control of flowering time. Promotes flowering at the shoot apical and axillary meristems. Seems to act through a gibberellin-dependent pathway. Interacts genetically with SOC1 and its expression is directly regulated by SOC1. Plays a role in controlling flower organ senescence and abscission by repressing ethylene responses and regulating the expression of BOP2 and IDA. In Arabidopsis thaliana (Mouse-ear cress), this protein is MADS-box protein AGL42 (AGL42).